The sequence spans 478 residues: UDP-N-acetylmuramate--L-alanine ligase (478 aa).

120–126 (GSHGKTT) contributes to the ATP binding site.

Belongs to the MurCDEF family.

It localises to the cytoplasm. The enzyme catalyses UDP-N-acetyl-alpha-D-muramate + L-alanine + ATP = UDP-N-acetyl-alpha-D-muramoyl-L-alanine + ADP + phosphate + H(+). The protein operates within cell wall biogenesis; peptidoglycan biosynthesis. Functionally, cell wall formation. The chain is UDP-N-acetylmuramate--L-alanine ligase from Rickettsia bellii (strain OSU 85-389).